A 461-amino-acid polypeptide reads, in one-letter code: UDP-N-acetylmuramoylalanine--D-glutamate ligase (461 aa).

Residue 115-121 (GSNGKTT) participates in ATP binding.

It belongs to the MurCDEF family.

The protein localises to the cytoplasm. The enzyme catalyses UDP-N-acetyl-alpha-D-muramoyl-L-alanine + D-glutamate + ATP = UDP-N-acetyl-alpha-D-muramoyl-L-alanyl-D-glutamate + ADP + phosphate + H(+). The protein operates within cell wall biogenesis; peptidoglycan biosynthesis. Cell wall formation. Catalyzes the addition of glutamate to the nucleotide precursor UDP-N-acetylmuramoyl-L-alanine (UMA). This chain is UDP-N-acetylmuramoylalanine--D-glutamate ligase, found in Acidobacterium capsulatum (strain ATCC 51196 / DSM 11244 / BCRC 80197 / JCM 7670 / NBRC 15755 / NCIMB 13165 / 161).